We begin with the raw amino-acid sequence, 99 residues long: Acylphosphatase (99 aa).

The Acylphosphatase-like domain occupies 10 to 99; that stretch reads RLTAFVHGHV…PRGVEGFTER (90 aa). Catalysis depends on residues Arg-25 and Asn-43.

This sequence belongs to the acylphosphatase family.

It catalyses the reaction an acyl phosphate + H2O = a carboxylate + phosphate + H(+). This chain is Acylphosphatase (acyP), found in Corynebacterium efficiens (strain DSM 44549 / YS-314 / AJ 12310 / JCM 11189 / NBRC 100395).